The sequence spans 503 residues: MAARLLSSVSLTDVVLLLSSVWIAVHLVLAAYNVYLHPLRRYPGPKLAAASQLLNVYHVLKGDNCKWTAQLHEKYGTVVRIGPNELSYISPSANQTIFGGRPKEDKVFEKNPVAYLQGNGDISNIFFARFHDHNRLRKLMAPAFSETAVREQEATIQGYTNQLIAALRNRSGQAAYPDAKGVVNIIPWLHFILFDVLTRLSFGDPIGCLDRADYHPWVSVIFKAIIHSTYTQAAHRLAPYQWILKHFIPNDMTANYEAHLEFTRKQLDQRQQVKEEPVARADFSSFMLKGMSPDELFDNVNIVITAGGETTASTISSSLYYLVHNPSSYERLTKEIRDTFSAEGEITLAAVAALPYLKAVIQEAMRIHPPVPIGLFRVAPAAGAFIDGQWVPGNTWVSVANLAASRSPTYWRDPERFTPERWLGDAKYESDVREASAPFSIGTRNCIGLNLANANMRIILARLLWNFDFEAQPDNIDPHELDEYGIWETKPLNLKIKERVQTT.

The chain crosses the membrane as a helical span at residues 14–34; the sequence is VVLLLSSVWIAVHLVLAAYNV. N94 and N169 each carry an N-linked (GlcNAc...) asparagine glycan. C446 lines the heme pocket.

The protein belongs to the cytochrome P450 family. It depends on heme as a cofactor.

It is found in the membrane. Its pathway is secondary metabolite biosynthesis. In terms of biological role, cytochrome P450 monooxygenase; part of the lnb gene cluster that mediates the biosynthesis of diastereomeric piperazines. Lna and lnb clusters encode sets of enzymes that produce overlapping sets of previously undescribed metabolites such as piperazinomycin-like metabolites or morpholine. The lna and lnb biosynthetic pathways appear to be part of a signaling network that controls the formation of sclerotia, a resilient overwintering structure. One primary function of the non-canonical nonribosomal peptide synthetases lnaA and lnbA consists in the reduction of L-tyrosine. The presence in the clusters of tailoring enzymes such as the oxidoreductases lnaB, lnbB, lnaE or lnbE, as well as of the cytochrome P450 monooxygenases lnaC, lnaD, or lnbC, might explain formation of various diastereomeric piperazines. The protein is Cytochrome P450 monooxygenase lnbC of Aspergillus flavus (strain ATCC 200026 / FGSC A1120 / IAM 13836 / NRRL 3357 / JCM 12722 / SRRC 167).